The following is a 547-amino-acid chain: Chaperonin GroEL 1 (547 aa).

ATP-binding positions include 30–33 (TLGP), K51, 87–91 (DGTTT), G415, and D496.

It belongs to the chaperonin (HSP60) family. Forms a cylinder of 14 subunits composed of two heptameric rings stacked back-to-back. Interacts with the co-chaperonin GroES.

It localises to the cytoplasm. It catalyses the reaction ATP + H2O + a folded polypeptide = ADP + phosphate + an unfolded polypeptide.. Its function is as follows. Together with its co-chaperonin GroES, plays an essential role in assisting protein folding. The GroEL-GroES system forms a nano-cage that allows encapsulation of the non-native substrate proteins and provides a physical environment optimized to promote and accelerate protein folding. This chain is Chaperonin GroEL 1, found in Gluconacetobacter diazotrophicus (strain ATCC 49037 / DSM 5601 / CCUG 37298 / CIP 103539 / LMG 7603 / PAl5).